The primary structure comprises 299 residues: Prohibitin-2 (299 aa).

Ala2 bears the N-acetylalanine mark. The segment at 19–49 (MGTALKLLLGAGAVAYGVRESVFTVEGGHRA) is necessary for transcriptional repression. The residue at position 128 (Tyr128) is a Phosphotyrosine. Lys147 carries the N6-acetyllysine modification. Residues 150–174 (ASQLITQRAQVSLLIRRELTERAKD) form a necessary for transcriptional repression region. Ser151 carries the post-translational modification Phosphoserine. Positions 190-238 (SREYTAAVEAKQVAQQEAQRAQFLVEKAKQEQRQKIVQAEGEAEAAKML) form a coiled coil. Residues Lys200, Lys236, Lys250, and Lys262 each carry the N6-acetyllysine modification.

It belongs to the prohibitin family. The mitochondrial prohibitin complex consists of two subunits (PHB1 and PHB2), assembled into a membrane-associated ring-shaped supercomplex of approximately 1 mDa. Interacts with ESR1, HDAC1 and HDAC5. Interacts with ZNF703. Interacts with STOML2. Interacts with ARFGEF3. Interacts with SPHK2. Interacts with COX4I1; the interaction associates PHB2 with COX. Interacts with MAP1LC3B (membrane-bound form LC3-II); the interaction is direct and upon mitochondrial depolarization and proteasome-dependent outer membrane rupture. Interacts with IGFBP6 (via C-terminal domain). Interacts with CLPB. Interacts with CD86 (via cytoplasmic domain); the interactions increases after priming with CD40. Interacts with AFG3L2. Interacts with DNAJC19. Interacts with AKT2; this interaction may be important for myogenic differentiation. In terms of processing, phosphorylated. Tyrosine phosphorylation is indirectly stimulated by IGFBP6. As to expression, widely expressed in different tissues.

The protein localises to the mitochondrion inner membrane. The protein resides in the cytoplasm. It is found in the nucleus. Its subcellular location is the cell membrane. In terms of biological role, protein with pleiotropic attributes mediated in a cell-compartment- and tissue-specific manner, which include the plasma membrane-associated cell signaling functions, mitochondrial chaperone, and transcriptional co-regulator of transcription factors and sex steroid hormones in the nucleus. Functionally, in the mitochondria, together with PHB, forms large ring complexes (prohibitin complexes) in the inner mitochondrial membrane (IMM) and functions as a chaperone protein that stabilizes mitochondrial respiratory enzymes and maintains mitochondrial integrity in the IMM, which is required for mitochondrial morphogenesis, neuronal survival, and normal lifespan. The prohibitin complex, with DNAJC19, regulates cardiolipin remodeling and the protein turnover of OMA1 in a cardiolipin-binding manner. Also regulates cytochrome-c oxidase assembly (COX) and mitochondrial respiration. Binding to sphingoid 1-phosphate (SPP) modulates its regulator activity. Has a key role of mitophagy receptor involved in targeting mitochondria for autophagic degradation. Involved in mitochondrial-mediated antiviral innate immunity, activates RIG-I-mediated signal transduction and production of IFNB1 and pro-inflammatory cytokine IL6. Its function is as follows. In the nucleus, serves as transcriptional co-regulator. Acts as a mediator of transcriptional repression by nuclear hormone receptors via recruitment of histone deacetylases. Functions as an estrogen receptor (ER)-selective coregulator that potentiates the inhibitory activities of antiestrogens and represses the activity of estrogens. Competes with NCOA1 for modulation of ER transcriptional activity. In the plasma membrane, is involved in IGFBP6-induced cell migration. Cooperates with CD86 to mediate CD86-signaling in B lymphocytes that regulates the level of IgG1 produced through the activation of distal signaling intermediates. Upon CD40 engagement, required to activate NF-kappa-B signaling pathway via phospholipase C and protein kinase C activation. The chain is Prohibitin-2 from Mus musculus (Mouse).